The following is a 170-amino-acid chain: UPF0690 protein C1orf52 homolog (170 aa).

Disordered stretches follow at residues 1–56 (MAAE…PDEL) and 124–170 (SNVY…KRKV). The span at 46–56 (DTKKLPGPDEL) shows a compositional bias: basic and acidic residues. Over residues 144–159 (EEEEAREDSPPSDDEQ) the composition is skewed to acidic residues.

The protein belongs to the UPF0690 family.

The polypeptide is UPF0690 protein C1orf52 homolog (Xenopus tropicalis (Western clawed frog)).